The sequence spans 151 residues: MKYQQLENLESGWKWAYLVKKHREGEAITRHIENSAAQDAVEQLMKLENEPVKVQEWIDAHMNVNLATRMKQTIRARRKRHFNAEHQHTRKKSIDLEFLVWQRLAVLARRRGNTLSDTVVQLIEDAERKEKYASQMSSLKQDLKDILDKEV.

The protein belongs to the MatP family. In terms of assembly, homodimer.

It is found in the cytoplasm. In terms of biological role, required for spatial organization of the terminus region of the chromosome (Ter macrodomain) during the cell cycle. Prevents early segregation of duplicated Ter macrodomains during cell division. Binds specifically to matS, which is a 13 bp signature motif repeated within the Ter macrodomain. The protein is Macrodomain Ter protein of Yersinia pseudotuberculosis serotype IB (strain PB1/+).